The sequence spans 94 residues: Large ribosomal subunit protein uL29 (94 aa).

The interval 66 to 94 (NPGERKSRVLSRAKRKKKNLARLSAKVKG) is disordered. Residues 73 to 94 (RVLSRAKRKKKNLARLSAKVKG) show a composition bias toward basic residues.

It belongs to the universal ribosomal protein uL29 family.

In Leptospira borgpetersenii serovar Hardjo-bovis (strain JB197), this protein is Large ribosomal subunit protein uL29.